Reading from the N-terminus, the 237-residue chain is Probable transcriptional regulatory protein PSHAa1370 (237 aa).

Belongs to the TACO1 family.

The protein resides in the cytoplasm. The polypeptide is Probable transcriptional regulatory protein PSHAa1370 (Pseudoalteromonas translucida (strain TAC 125)).